A 142-amino-acid chain; its full sequence is Large ribosomal subunit protein uL11 (142 aa).

Belongs to the universal ribosomal protein uL11 family. Part of the ribosomal stalk of the 50S ribosomal subunit. Interacts with L10 and the large rRNA to form the base of the stalk. L10 forms an elongated spine to which L12 dimers bind in a sequential fashion forming a multimeric L10(L12)X complex. In terms of processing, one or more lysine residues are methylated.

In terms of biological role, forms part of the ribosomal stalk which helps the ribosome interact with GTP-bound translation factors. The sequence is that of Large ribosomal subunit protein uL11 from Shewanella baltica (strain OS223).